The chain runs to 311 residues: Protein translocase subunit SecF (311 aa).

6 helical membrane-spanning segments follow: residues 23 to 42 (VSYSFSIILSLISLIWISIY), 140 to 160 (IEAGAMAMLFSFLAIMVYIGV), 164 to 184 (WYFGFGILIALVHDVILALGF), 194 to 214 (LSTIAAVLTIIGYSVNDSVVI), 246 to 266 (ILTVITTLLANLALILFGGKA), and 272 to 292 (VLVFFGIIAGTYSSIFISAPI).

It belongs to the SecD/SecF family. SecF subfamily. Forms a complex with SecD. Part of the essential Sec protein translocation apparatus which comprises SecA, SecYEG and auxiliary proteins SecDF-YajC and YidC.

Its subcellular location is the cell inner membrane. Part of the Sec protein translocase complex. Interacts with the SecYEG preprotein conducting channel. SecDF uses the proton motive force (PMF) to complete protein translocation after the ATP-dependent function of SecA. This chain is Protein translocase subunit SecF, found in Rickettsia prowazekii (strain Madrid E).